Here is a 475-residue protein sequence, read N- to C-terminus: ATP synthase subunit beta (475 aa).

ATP is bound at residue 160 to 167 (GGAGVGKT).

Belongs to the ATPase alpha/beta chains family. F-type ATPases have 2 components, CF(1) - the catalytic core - and CF(0) - the membrane proton channel. CF(1) has five subunits: alpha(3), beta(3), gamma(1), delta(1), epsilon(1). CF(0) has three main subunits: a(1), b(2) and c(9-12). The alpha and beta chains form an alternating ring which encloses part of the gamma chain. CF(1) is attached to CF(0) by a central stalk formed by the gamma and epsilon chains, while a peripheral stalk is formed by the delta and b chains.

The protein resides in the cell membrane. The enzyme catalyses ATP + H2O + 4 H(+)(in) = ADP + phosphate + 5 H(+)(out). Produces ATP from ADP in the presence of a proton gradient across the membrane. The catalytic sites are hosted primarily by the beta subunits. In Mycolicibacterium vanbaalenii (strain DSM 7251 / JCM 13017 / BCRC 16820 / KCTC 9966 / NRRL B-24157 / PYR-1) (Mycobacterium vanbaalenii), this protein is ATP synthase subunit beta.